A 121-amino-acid chain; its full sequence is Parathyroid hormone 4 (121 aa).

The N-terminal stretch at 1-24 (MLKMQRSQQRVALMMLMVVAAVHC) is a signal peptide. Positions 25-29 (QESES) are excised as a propeptide. Residues 77 to 97 (RSRGAQLYSQPGREESSGGQK) form a disordered region.

The protein belongs to the parathyroid hormone family. In terms of tissue distribution, specifically expressed in a bilateral cluster of neurons in the dorsal region of the periventricular hypothalamus. Their axons project through the midbrain and hindbrain and down the spinal cord.

It is found in the secreted. Neuroendocrine peptide which is produced by a subset of neurons in the hypothalamus. Activates the G-protein coupled receptors pth1ra, pth1rb and pth2r with similar affinity. Receptor binding stimulates intracellular cAMP production. Plays a role in bone mineralization by regulating expression of factors involved in phosphate homeostasis. Important for embryonic bone development. In Danio rerio (Zebrafish), this protein is Parathyroid hormone 4.